Reading from the N-terminus, the 126-residue chain is Protein Wnt-7(II) (126 aa).

S1 carries the O-palmitoleoyl serine; by PORCN lipid modification. A disulfide bridge links C92 with C107. N93 carries N-linked (GlcNAc...) asparagine glycosylation.

The protein belongs to the Wnt family. Palmitoleoylation is required for efficient binding to frizzled receptors. Depalmitoleoylation leads to Wnt signaling pathway inhibition.

The protein localises to the secreted. The protein resides in the extracellular space. It localises to the extracellular matrix. Functionally, ligand for members of the frizzled family of seven transmembrane receptors. Probable developmental protein. May be a signaling molecule which affects the development of discrete regions of tissues. Is likely to signal over only few cell diameters. This is Protein Wnt-7(II) (WNT-7(II)) from Eptatretus stoutii (Pacific hagfish).